Here is a 328-residue protein sequence, read N- to C-terminus: Carbonic anhydrase-related protein 11 (328 aa).

Positions 1–22 (MGAAARLSAPRALVLWAALGAA) are cleaved as a signal peptide. Residues 33–303 (DWWSYKDNLQ…LAHRALRGNR (271 aa)) form the Alpha-carbonic anhydrase domain. 3 N-linked (GlcNAc...) asparagine glycosylation sites follow: asparagine 118, asparagine 170, and asparagine 260. Residues 300–328 (RGNRDPRHPERRCRGPNYRLHVDGAPHGR) form a disordered region. Residues 319 to 328 (LHVDGAPHGR) are compositionally biased toward basic and acidic residues.

The protein belongs to the alpha-carbonic anhydrase family.

It localises to the secreted. In terms of biological role, does not have a catalytic activity. This is Carbonic anhydrase-related protein 11 (CA11) from Bos taurus (Bovine).